A 214-amino-acid polypeptide reads, in one-letter code: Large ribosomal subunit protein uL3 (214 aa).

The protein belongs to the universal ribosomal protein uL3 family. In terms of assembly, part of the 50S ribosomal subunit. Forms a cluster with proteins L14 and L19.

Functionally, one of the primary rRNA binding proteins, it binds directly near the 3'-end of the 23S rRNA, where it nucleates assembly of the 50S subunit. The protein is Large ribosomal subunit protein uL3 of Streptomyces coelicolor (strain ATCC BAA-471 / A3(2) / M145).